A 452-amino-acid polypeptide reads, in one-letter code: Protoheme IX farnesyltransferase, mitochondrial (452 aa).

Residues 1–27 (MSLVIQPLLMRALNPNLSSILISGRGF) constitute a mitochondrion transit peptide. Transmembrane regions (helical) follow at residues 152 to 172 (VLVM…ATVL), 235 to 255 (ILWL…IALY), 267 to 287 (IINT…GWAA), 291 to 311 (LSHP…FPHF), 341 to 361 (VALR…YFNV), 364 to 386 (WYYQ…KFYF), and 417 to 437 (TFWV…LHKK).

The protein belongs to the UbiA prenyltransferase family.

It is found in the mitochondrion membrane. In terms of biological role, converts protoheme IX and farnesyl diphosphate to heme O. This Kluyveromyces lactis (strain ATCC 8585 / CBS 2359 / DSM 70799 / NBRC 1267 / NRRL Y-1140 / WM37) (Yeast) protein is Protoheme IX farnesyltransferase, mitochondrial (COX10).